The following is a 215-amino-acid chain: Probable transaldolase 1 (215 aa).

The active-site Schiff-base intermediate with substrate is lysine 83.

The protein belongs to the transaldolase family. Type 3B subfamily.

Its subcellular location is the cytoplasm. The enzyme catalyses D-sedoheptulose 7-phosphate + D-glyceraldehyde 3-phosphate = D-erythrose 4-phosphate + beta-D-fructose 6-phosphate. It participates in carbohydrate degradation; pentose phosphate pathway; D-glyceraldehyde 3-phosphate and beta-D-fructose 6-phosphate from D-ribose 5-phosphate and D-xylulose 5-phosphate (non-oxidative stage): step 2/3. In terms of biological role, transaldolase is important for the balance of metabolites in the pentose-phosphate pathway. This is Probable transaldolase 1 from Bacillus anthracis.